The primary structure comprises 325 residues: uncharacterized protein (325 aa).

2 stretches are compositionally biased toward polar residues: residues 1–21 (MSYQQRANDSMNSAKQYSSSA) and 29–57 (EPFSSSGAPQNRNFDTSYTSEIPSNSSRA). The interval 1–325 (MSYQQRANDS…LKTGHHSERY (325 aa)) is disordered. The segment covering 86 to 109 (ESRKKEQSDVRGGDTSYSRRHDDS) has biased composition (basic and acidic residues). Composition is skewed to polar residues over residues 114 to 167 (NKYS…TTQG) and 174 to 193 (YSQSYPTDTYGSRQKATPSD). Low complexity-rich tracts occupy residues 200–210 (YDYSSSGSHTH) and 252–278 (ATDTTAEANRRAATGTRNARTTAQRNA). Residues 282–325 (EDEHVSMGDKMKGNMEKMAGKLTRDPELVQKGEDLKTGHHSERY) show a composition bias toward basic and acidic residues.

This is an uncharacterized protein from Schizosaccharomyces pombe (strain 972 / ATCC 24843) (Fission yeast).